We begin with the raw amino-acid sequence, 121 residues long: Ribonuclease CL2 (121 aa).

Substrate is bound by residues Lys6 and Arg9. His11 (proton acceptor) is an active-site residue. Cystine bridges form between Cys26-Cys81, Cys42-Cys92, and Cys60-Cys107. Substrate contacts are provided by residues 43–47 and Arg82; that span reads KPSNT. Catalysis depends on His114, which acts as the Proton donor.

It belongs to the pancreatic ribonuclease family.

It is found in the secreted. Its function is as follows. Pyrimidine-specific nuclease with preference for C. The protein is Ribonuclease CL2 of Gallus gallus (Chicken).